Here is a 119-residue protein sequence, read N- to C-terminus: Ribonuclease P protein component (119 aa).

Belongs to the RnpA family. As to quaternary structure, consists of a catalytic RNA component (M1 or rnpB) and a protein subunit.

It carries out the reaction Endonucleolytic cleavage of RNA, removing 5'-extranucleotides from tRNA precursor.. In terms of biological role, RNaseP catalyzes the removal of the 5'-leader sequence from pre-tRNA to produce the mature 5'-terminus. It can also cleave other RNA substrates such as 4.5S RNA. The protein component plays an auxiliary but essential role in vivo by binding to the 5'-leader sequence and broadening the substrate specificity of the ribozyme. This Nitrosococcus oceani (strain ATCC 19707 / BCRC 17464 / JCM 30415 / NCIMB 11848 / C-107) protein is Ribonuclease P protein component.